The primary structure comprises 869 residues: Valine--tRNA ligase (869 aa).

The 'HIGH' region motif lies at 51 to 61; the sequence is PNVTGNLHLGH. The short motif at 523–527 is the 'KMSKS' region element; that stretch reads KMSKS. Lys-526 contacts ATP. A coiled-coil region spans residues 797–869; sequence EDLLGSNNEA…ELEKLLSSHK (73 aa).

Belongs to the class-I aminoacyl-tRNA synthetase family. ValS type 1 subfamily. Monomer.

The protein resides in the cytoplasm. The catalysed reaction is tRNA(Val) + L-valine + ATP = L-valyl-tRNA(Val) + AMP + diphosphate. In terms of biological role, catalyzes the attachment of valine to tRNA(Val). As ValRS can inadvertently accommodate and process structurally similar amino acids such as threonine, to avoid such errors, it has a 'posttransfer' editing activity that hydrolyzes mischarged Thr-tRNA(Val) in a tRNA-dependent manner. This is Valine--tRNA ligase from Malacoplasma penetrans (strain HF-2) (Mycoplasma penetrans).